The sequence spans 429 residues: CBL-interacting serine/threonine-protein kinase 7 (429 aa).

Residues 25–280 (YELGRRLGSG…IETVMKTNWF (256 aa)) enclose the Protein kinase domain. ATP is bound by residues 31 to 39 (LGSGSFAKV) and Lys54. The Proton acceptor role is filled by Asp149. The interval 167 to 195 (DFGLSALPEHLQNGLLHTACGTPAYTAPE) is activation loop. Ser171 is subject to Phosphoserine. A Phosphothreonine modification is found at Thr184. Positions 302–326 (SSVNSITAFDLISLSSGLDLSGLFE) constitute an NAF domain. The tract at residues 330–363 (KKERRFTAKVSGVEVEEKAKMIGEKLGYVVKKKM) is PPI.

It belongs to the protein kinase superfamily. CAMK Ser/Thr protein kinase family. SNF1 subfamily. As to quaternary structure, interacts with CBL1, CBL2 and CBL3. The cofactor is Mn(2+). Post-translationally, autophosphorylated. As to expression, strongly expressed in leaves, but barely expressed in roots, stems or flowers.

It catalyses the reaction L-seryl-[protein] + ATP = O-phospho-L-seryl-[protein] + ADP + H(+). The catalysed reaction is L-threonyl-[protein] + ATP = O-phospho-L-threonyl-[protein] + ADP + H(+). Functionally, CIPK serine-threonine protein kinases interact with CBL proteins. Binding of a CBL protein to the regulatory NAF domain of CIPK protein lead to the activation of the kinase in a calcium-dependent manner. Phosphorylates the rice sucrose synthase (SuSy) in vitro in an allosteric manner. Involved in cold response. The polypeptide is CBL-interacting serine/threonine-protein kinase 7 (CIPK7) (Arabidopsis thaliana (Mouse-ear cress)).